A 281-amino-acid chain; its full sequence is Apolipoprotein E (281 aa).

An N-terminal signal peptide occupies residues 1-18 (MKVLWAALLIALLAGCQG). 5 consecutive repeat copies span residues 82-103 (ALMD…EQLS), 104-125 (PVAE…ARLG), 126-147 (ADME…AMLG), 148-169 (QSTD…TVSY), and 198-219 (TRME…EQVE). Residues 82–219 (ALMDETMKEL…RLDEVKEQVE (138 aa)) form a 5 X 22 AA approximate tandem repeats region. Residue Met145 is modified to Methionine sulfoxide. Ser149 is subject to Phosphoserine. The tract at residues 160 to 170 (HLRKLRTVSYT) is LDL and other lipoprotein receptors binding. Residues 164–167 (LRTV) and 193–200 (GERLRTRM) contribute to the heparin site. Residues 230–281 (QQMRLQAEAFQARLKSWFEPLVEDMQRQWAGLVEKVQAAVGASAAPVPSDNH) are homooligomerization. Positions 242-254 (RLKSWFEPLVEDM) are specificity for association with VLDL.

Belongs to the apolipoprotein A1/A4/E family. Homotetramer. May interact with ABCA1; functionally associated with ABCA1 in the biogenesis of HDLs. May interact with APP/A4 amyloid-beta peptide; the interaction is extremely stable in vitro but its physiological significance is unclear. May interact with MAPT. May interact with MAP2. In the cerebrospinal fluid, interacts with secreted SORL1. Interacts with PMEL; this allows the loading of PMEL luminal fragment on ILVs to induce fibril nucleation. APOE exists as multiple glycosylated and sialylated glycoforms within cells and in plasma. The extent of glycosylation and sialylation are tissue and context specific. Post-translationally, glycated in plasma VLDL. In terms of processing, phosphorylated by FAM20C in the extracellular medium.

It localises to the secreted. It is found in the extracellular space. The protein resides in the extracellular matrix. The protein localises to the extracellular vesicle. Its subcellular location is the endosome. It localises to the multivesicular body. Its function is as follows. APOE is an apolipoprotein, a protein associating with lipid particles, that mainly functions in lipoprotein-mediated lipid transport between organs via the plasma and interstitial fluids. APOE is a core component of plasma lipoproteins and is involved in their production, conversion and clearance. Apolipoproteins are amphipathic molecules that interact both with lipids of the lipoprotein particle core and the aqueous environment of the plasma. As such, APOE associates with chylomicrons, chylomicron remnants, very low density lipoproteins (VLDL) and intermediate density lipoproteins (IDL) but shows a preferential binding to high-density lipoproteins (HDL). It also binds a wide range of cellular receptors including the LDL receptor/LDLR, the LDL receptor-related proteins LRP1, LRP2 and LRP8 and the very low-density lipoprotein receptor/VLDLR that mediate the cellular uptake of the APOE-containing lipoprotein particles. Finally, APOE also has a heparin-binding activity and binds heparan-sulfate proteoglycans on the surface of cells, a property that supports the capture and the receptor-mediated uptake of APOE-containing lipoproteins by cells. A main function of APOE is to mediate lipoprotein clearance through the uptake of chylomicrons, VLDLs, and HDLs by hepatocytes. APOE is also involved in the biosynthesis by the liver of VLDLs as well as their uptake by peripheral tissues ensuring the delivery of triglycerides and energy storage in muscle, heart and adipose tissues. By participating in the lipoprotein-mediated distribution of lipids among tissues, APOE plays a critical role in plasma and tissues lipid homeostasis. APOE is also involved in two steps of reverse cholesterol transport, the HDLs-mediated transport of cholesterol from peripheral tissues to the liver, and thereby plays an important role in cholesterol homeostasis. First, it is functionally associated with ABCA1 in the biogenesis of HDLs in tissues. Second, it is enriched in circulating HDLs and mediates their uptake by hepatocytes. APOE also plays an important role in lipid transport in the central nervous system, regulating neuron survival and sprouting. The polypeptide is Apolipoprotein E (APOE) (Aotus nancymaae (Ma's night monkey)).